The following is a 146-amino-acid chain: Snake venom vascular endothelial growth factor toxin (146 aa).

The first 24 residues, 1 to 24, serve as a signal peptide directing secretion; the sequence is MAAYLLAVAILFCIQGWPLGTVQG. Glutamine 25 carries the post-translational modification Pyrrolidone carboxylic acid. Disulfide bonds link cysteine 38-cysteine 80, cysteine 69-cysteine 115, and cysteine 73-cysteine 117. Residues 119 to 146 are disordered; sequence PRSASGVNSRKHKRNPEEGEPRAKFPFV. Over residues 133-146 the composition is skewed to basic and acidic residues; it reads NPEEGEPRAKFPFV.

Belongs to the PDGF/VEGF growth factor family. Snake venom VEGF subfamily. Homodimer; disulfide-linked. Interacts with VEGF receptor-1 (FLT1) with a high affinity, whereas it binds to VEGF receptor-2 (KDR) with a low affinity. Does not bind VEGF receptor-3 (FLT4). Expressed by the venom gland.

The protein localises to the secreted. Functionally, snake venom VEGFs may contribute to venom dispersion and prey subjugation by inducing vascular permeability and hypotension. This protein induces vascular permeability probably through VEGF (VEGFR) signaling. This protein also induces a drastic hypotensive effect after intravenous injection. The hypotension is mediated by nitric oxide (NO), which is produced by VEGF-activated endothelium NO synthase. Also induces angiogenesis in vitro. Like other crotalid VEGFs, this protein interacts with VEGF receptor-1 (FLT1) with a high affinity, whereas it binds to VEGF receptor-2 (KDR) with a low affinity. In Bothrops insularis (Golden lancehead), this protein is Snake venom vascular endothelial growth factor toxin.